The following is a 205-amino-acid chain: MLQQDSNDDTEDVSLFDAEEETTNRPRKAKIRHPVASFFHLFFRVSAIIVYLLCELLSSSFITCMVTIILLLSCDFWAVKNVTGRLMVGLRWWNHIDEDGKSHWVFESRKESSQENKTVSEAESRIFWLGLIACPVLWVIFAFSALFSFRVKWLAVVIMGVVLQGANLYGYIRCKVGSRKNLTSMATSYFGKQFLRQNTGDDQTS.

N-acetylmethionine is present on methionine 1. The segment at 1-21 is disordered; it reads MLQQDSNDDTEDVSLFDAEEE. Helical transmembrane passes span 34–53, 54–72, 126–146, and 152–172; these read PVAS…VYLL, CELL…ILLL, IFWL…FSAL, and KWLA…YGYI.

It belongs to the TVP23 family.

The protein resides in the membrane. This is Golgi apparatus membrane protein TVP23 homolog B (TVP23B) from Pongo abelii (Sumatran orangutan).